An 89-amino-acid chain; its full sequence is Small ribosomal subunit protein bS20 (89 aa).

The tract at residues 1–28 is disordered; sequence MANHYSALKRARQTETRTARNRANTSRM.

Belongs to the bacterial ribosomal protein bS20 family.

Binds directly to 16S ribosomal RNA. The protein is Small ribosomal subunit protein bS20 of Koribacter versatilis (strain Ellin345).